The primary structure comprises 430 residues: Hydrogenobyrinate a,c-diamide synthase (430 aa).

A GATase cobBQ-type domain is found at 239–422 (RIGVARDAAF…IHFYLPSDPL (184 aa)). Cys-321 acts as the Nucleophile in catalysis.

It belongs to the CobB/CbiA family. Requires Mg(2+) as cofactor.

It carries out the reaction hydrogenobyrinate + 2 L-glutamine + 2 ATP + 2 H2O = hydrogenobyrinate a,c-diamide + 2 L-glutamate + 2 ADP + 2 phosphate + 2 H(+). Its pathway is cofactor biosynthesis; adenosylcobalamin biosynthesis; cob(II)yrinate a,c-diamide from precorrin-2 (aerobic route): step 9/10. Its function is as follows. Catalyzes the ATP-dependent amidation of the two carboxylate groups at positions a and c of hydrogenobyrinate, using either L-glutamine or ammonia as the nitrogen source. The chain is Hydrogenobyrinate a,c-diamide synthase from Stutzerimonas stutzeri (strain A1501) (Pseudomonas stutzeri).